A 172-amino-acid chain; its full sequence is Molybdopterin synthase catalytic subunit (172 aa).

Residue Ser20 is modified to Phosphoserine. Substrate-binding positions include 127-128 (HR), Lys143, and 150-152 (KKE).

This sequence belongs to the MoaE family. MOCS2B subfamily. Heterotetramer; composed of 2 small (MOCS2A) and 2 large (MOCS2B) subunits.

Its subcellular location is the cytoplasm. The protein resides in the cytosol. The catalysed reaction is 2 [molybdopterin-synthase sulfur-carrier protein]-C-terminal-Gly-aminoethanethioate + cyclic pyranopterin phosphate + H2O = molybdopterin + 2 [molybdopterin-synthase sulfur-carrier protein]-C-terminal Gly-Gly + 2 H(+). The protein operates within cofactor biosynthesis; molybdopterin biosynthesis. Functionally, catalytic subunit of the molybdopterin synthase complex, a complex that catalyzes the conversion of precursor Z into molybdopterin. Acts by mediating the incorporation of 2 sulfur atoms from thiocarboxylated MOCS2A into precursor Z to generate a dithiolene group. The protein is Molybdopterin synthase catalytic subunit of Pongo abelii (Sumatran orangutan).